The primary structure comprises 393 residues: Mitogen-activated protein kinase homolog NTF4 (393 aa).

The tract at residues 1–32 (MDGPAHQTDTVMSDAAGQQPAPPSQPVAGIDN) is disordered. The 286-residue stretch at 60-345 (KPPIMPIGKG…VEDALAHPYL (286 aa)) folds into the Protein kinase domain. Residues 66–74 (IGKGAYGIV) and Lys89 each bind ATP. Residue Asp186 is the Proton acceptor of the active site. At Thr218 the chain carries Phosphothreonine. The short motif at 218 to 220 (TEY) is the TXY element. Phosphotyrosine is present on Tyr220.

Belongs to the protein kinase superfamily. CMGC Ser/Thr protein kinase family. MAP kinase subfamily. Mg(2+) serves as cofactor. Dually phosphorylated on Thr-218 and Tyr-220, which activates the enzyme. Very low autophosphorylation, although dramatically increased when Mn(2+) is added to the reaction instead of Mg(2+).

It carries out the reaction L-seryl-[protein] + ATP = O-phospho-L-seryl-[protein] + ADP + H(+). The enzyme catalyses L-threonyl-[protein] + ATP = O-phospho-L-threonyl-[protein] + ADP + H(+). With respect to regulation, activated by tyrosine and threonine phosphorylation. In Nicotiana tabacum (Common tobacco), this protein is Mitogen-activated protein kinase homolog NTF4 (NTF4).